We begin with the raw amino-acid sequence, 517 residues long: Bifunctional purine biosynthesis protein PurH (517 aa).

In terms of domain architecture, MGS-like spans 1 to 146 (MAPIALLSVS…KNHAHVAVLT (146 aa)).

Belongs to the PurH family.

The enzyme catalyses (6R)-10-formyltetrahydrofolate + 5-amino-1-(5-phospho-beta-D-ribosyl)imidazole-4-carboxamide = 5-formamido-1-(5-phospho-D-ribosyl)imidazole-4-carboxamide + (6S)-5,6,7,8-tetrahydrofolate. The catalysed reaction is IMP + H2O = 5-formamido-1-(5-phospho-D-ribosyl)imidazole-4-carboxamide. Its pathway is purine metabolism; IMP biosynthesis via de novo pathway; 5-formamido-1-(5-phospho-D-ribosyl)imidazole-4-carboxamide from 5-amino-1-(5-phospho-D-ribosyl)imidazole-4-carboxamide (10-formyl THF route): step 1/1. The protein operates within purine metabolism; IMP biosynthesis via de novo pathway; IMP from 5-formamido-1-(5-phospho-D-ribosyl)imidazole-4-carboxamide: step 1/1. The chain is Bifunctional purine biosynthesis protein PurH from Prochlorococcus marinus (strain MIT 9313).